Consider the following 61-residue polypeptide: MSSLKIKLVKGRAGKDKRQLATLDALDLTRKDKVVIKPDNPQIRGMIRTVHHLVEWEEIDS.

The protein belongs to the universal ribosomal protein uL30 family. As to quaternary structure, part of the 50S ribosomal subunit.

The polypeptide is Large ribosomal subunit protein uL30 (Petrotoga mobilis (strain DSM 10674 / SJ95)).